Reading from the N-terminus, the 280-residue chain is 2-dehydro-3-deoxyphosphooctonate aldolase (280 aa).

The protein belongs to the KdsA family.

Its subcellular location is the cytoplasm. It carries out the reaction D-arabinose 5-phosphate + phosphoenolpyruvate + H2O = 3-deoxy-alpha-D-manno-2-octulosonate-8-phosphate + phosphate. It participates in carbohydrate biosynthesis; 3-deoxy-D-manno-octulosonate biosynthesis; 3-deoxy-D-manno-octulosonate from D-ribulose 5-phosphate: step 2/3. Its pathway is bacterial outer membrane biogenesis; lipopolysaccharide biosynthesis. The sequence is that of 2-dehydro-3-deoxyphosphooctonate aldolase from Pseudomonas putida (strain W619).